A 349-amino-acid chain; its full sequence is Putative methylesterase 12, chloroplastic (349 aa).

A chloroplast-targeting transit peptide spans 1-77; it reads MGNRVICMKK…GSTSSRRGTL (77 aa). Residues 61–80 form a disordered region; sequence GSMSRRIGSTSSRRGTLSDS. Residue Ser173 is the Acyl-ester intermediate of the active site. Catalysis depends on charge relay system residues Asp300 and His328.

It belongs to the AB hydrolase superfamily. Methylesterase family.

The protein localises to the plastid. It is found in the chloroplast. In terms of biological role, putative methylesterase. In Arabidopsis thaliana (Mouse-ear cress), this protein is Putative methylesterase 12, chloroplastic.